A 350-amino-acid chain; its full sequence is UDP-glucose 4-epimerase GEPI48 (350 aa).

Residue 5-36 (TVLVTGGAGYIGSHTVLQLLLGGFKAVVVDNL) participates in NAD(+) binding. S130 is a substrate binding site. The active-site Proton acceptor is Y154.

This sequence belongs to the NAD(P)-dependent epimerase/dehydratase family. It depends on NAD(+) as a cofactor.

It catalyses the reaction UDP-alpha-D-glucose = UDP-alpha-D-galactose. It functions in the pathway carbohydrate metabolism; galactose metabolism. The chain is UDP-glucose 4-epimerase GEPI48 from Cyamopsis tetragonoloba (Guar).